A 202-amino-acid chain; its full sequence is Probable GTP-binding protein EngB (202 aa).

The 176-residue stretch at 22-197 folds into the EngB-type G domain; that stretch reads VFPEYAFIGR…LDYIENISKE (176 aa). Residues 30-37, 57-61, 75-78, 142-145, and 173-178 contribute to the GTP site; these read GRSNVGKS, GKTML, DLPG, TKAD, and YFISSS. The Mg(2+) site is built by Ser-37 and Thr-59.

This sequence belongs to the TRAFAC class TrmE-Era-EngA-EngB-Septin-like GTPase superfamily. EngB GTPase family. The cofactor is Mg(2+).

Necessary for normal cell division and for the maintenance of normal septation. This Bacteroides thetaiotaomicron (strain ATCC 29148 / DSM 2079 / JCM 5827 / CCUG 10774 / NCTC 10582 / VPI-5482 / E50) protein is Probable GTP-binding protein EngB.